The primary structure comprises 147 residues: Deoxyuridine 5'-triphosphate nucleotidohydrolase (147 aa).

Substrate is bound by residues 67–69 (RSG), Asn-80, and 84–86 (TID).

It belongs to the dUTPase family. It depends on Mg(2+) as a cofactor.

The enzyme catalyses dUTP + H2O = dUMP + diphosphate + H(+). Its pathway is pyrimidine metabolism; dUMP biosynthesis; dUMP from dCTP (dUTP route): step 2/2. Its function is as follows. This enzyme is involved in nucleotide metabolism: it produces dUMP, the immediate precursor of thymidine nucleotides and it decreases the intracellular concentration of dUTP so that uracil cannot be incorporated into DNA. This chain is Deoxyuridine 5'-triphosphate nucleotidohydrolase, found in Syntrophotalea carbinolica (strain DSM 2380 / NBRC 103641 / GraBd1) (Pelobacter carbinolicus).